The sequence spans 59 residues: Large ribosomal subunit protein bL32 (59 aa).

Belongs to the bacterial ribosomal protein bL32 family.

The chain is Large ribosomal subunit protein bL32 from Polynucleobacter necessarius subsp. necessarius (strain STIR1).